A 339-amino-acid chain; its full sequence is NADH-quinone oxidoreductase subunit H (339 aa).

A run of 9 helical transmembrane segments spans residues 10–30 (FPLT…ILCV), 50–70 (PNVV…KLLF), 82–102 (ILFI…WAVI), 115–135 (VGVL…IIAG), 155–175 (ISYE…TGTL), 187–207 (LPWW…ISVL), 235–255 (MGFA…SAMT), 275–295 (IPGF…FLWI), and 311–331 (GWKV…SVLF).

Belongs to the complex I subunit 1 family. In terms of assembly, NDH-1 is composed of 14 different subunits. Subunits NuoA, H, J, K, L, M, N constitute the membrane sector of the complex.

Its subcellular location is the cell inner membrane. The enzyme catalyses a quinone + NADH + 5 H(+)(in) = a quinol + NAD(+) + 4 H(+)(out). In terms of biological role, NDH-1 shuttles electrons from NADH, via FMN and iron-sulfur (Fe-S) centers, to quinones in the respiratory chain. The immediate electron acceptor for the enzyme in this species is believed to be ubiquinone. Couples the redox reaction to proton translocation (for every two electrons transferred, four hydrogen ions are translocated across the cytoplasmic membrane), and thus conserves the redox energy in a proton gradient. This subunit may bind ubiquinone. This chain is NADH-quinone oxidoreductase subunit H, found in Rickettsia typhi (strain ATCC VR-144 / Wilmington).